The primary structure comprises 394 residues: Dual-specificity RNA methyltransferase RlmN (394 aa).

E115 acts as the Proton acceptor in catalysis. The Radical SAM core domain maps to 121–360 (EADRATLCVS…VIVRKTRGDD (240 aa)). Residues C128 and C365 are joined by a disulfide bond. The [4Fe-4S] cluster site is built by C135, C139, and C142. S-adenosyl-L-methionine contacts are provided by residues 189–190 (GE), S221, 243–245 (SLH), and N322. Residue C365 is the S-methylcysteine intermediate of the active site.

Belongs to the radical SAM superfamily. RlmN family. The cofactor is [4Fe-4S] cluster.

Its subcellular location is the cytoplasm. The catalysed reaction is adenosine(2503) in 23S rRNA + 2 reduced [2Fe-2S]-[ferredoxin] + 2 S-adenosyl-L-methionine = 2-methyladenosine(2503) in 23S rRNA + 5'-deoxyadenosine + L-methionine + 2 oxidized [2Fe-2S]-[ferredoxin] + S-adenosyl-L-homocysteine. It catalyses the reaction adenosine(37) in tRNA + 2 reduced [2Fe-2S]-[ferredoxin] + 2 S-adenosyl-L-methionine = 2-methyladenosine(37) in tRNA + 5'-deoxyadenosine + L-methionine + 2 oxidized [2Fe-2S]-[ferredoxin] + S-adenosyl-L-homocysteine. Specifically methylates position 2 of adenine 2503 in 23S rRNA and position 2 of adenine 37 in tRNAs. m2A2503 modification seems to play a crucial role in the proofreading step occurring at the peptidyl transferase center and thus would serve to optimize ribosomal fidelity. The protein is Dual-specificity RNA methyltransferase RlmN of Pasteurella multocida (strain Pm70).